The following is a 392-amino-acid chain: 2,3-bisphosphoglycerate-independent phosphoglycerate mutase (392 aa).

This sequence belongs to the BPG-independent phosphoglycerate mutase family. A-PGAM subfamily.

The enzyme catalyses (2R)-2-phosphoglycerate = (2R)-3-phosphoglycerate. It participates in carbohydrate degradation; glycolysis; pyruvate from D-glyceraldehyde 3-phosphate: step 3/5. In terms of biological role, catalyzes the interconversion of 2-phosphoglycerate and 3-phosphoglycerate. The protein is 2,3-bisphosphoglycerate-independent phosphoglycerate mutase of Methanothrix thermoacetophila (strain DSM 6194 / JCM 14653 / NBRC 101360 / PT) (Methanosaeta thermophila).